We begin with the raw amino-acid sequence, 601 residues long: Beta-phellandrene synthase (601 aa).

The transit peptide at 1-35 directs the protein to the chloroplast; the sequence is MSTISIHHVGILRNPLPSKNKRALINNPWSLSLPR. Mn(2+) contacts are provided by Asp356 and Asp360. Positions 356–360 match the DDXXD motif motif; sequence DDVYD. Homodimerization regions lie at residues 362 to 368 and 434 to 471; these read YGTLDEL and EAEW…LSIP. 2 residues coordinate Mn(2+): Asp499 and Glu507.

Belongs to the terpene synthase family. In terms of assembly, homodimer. It depends on Mn(2+) as a cofactor. The cofactor is Mg(2+). Expressed in peltate glandular trichomes. Present at low levels in flowers and stems.

The protein localises to the plastid. It localises to the chloroplast. It carries out the reaction (2E)-geranyl diphosphate = beta-phellandrene + diphosphate. The catalysed reaction is (2E)-geranyl diphosphate = (1R,5R)-sabinene + diphosphate. The protein operates within secondary metabolite biosynthesis; terpenoid biosynthesis. Involved in the biosynthesis of phenolic monoterpenes natural products. Monoterpene synthase that catalyzes mainly the formation of olefins such as sabinene and beta-phellandrene, and minor amounts of other monoterpenes (e.g. myrcene, gamma-terpinene, alpha-thujene and alpha-pinene) from geranyl diphosphate (GPP). This Origanum vulgare (Wild marjoram) protein is Beta-phellandrene synthase.